The following is a 142-amino-acid chain: MVLSAADKTNVKGVFSKIGGHAEEYGAETLERMFIAYPQTKTYFPHFDLSHGSAQIKAHGKKVAAALVEAVNHIDDIAGALSKLSDLHAQKLRVDPVNFKFLGHCFLVVVAIHHPAALTPEVHASLDKFMCAVGAVLTAKYR.

The region spanning 2 to 142 is the Globin domain; it reads VLSAADKTNV…VGAVLTAKYR (141 aa). H59 lines the O2 pocket. Heme b is bound at residue H88.

The protein belongs to the globin family. In terms of assembly, heterotetramer of two alpha chains and two beta chains. In terms of tissue distribution, red blood cells.

Functionally, involved in oxygen transport from the lung to the various peripheral tissues. This Anas platyrhynchos platyrhynchos (Northern mallard) protein is Hemoglobin subunit alpha-A (HBAA).